The primary structure comprises 749 residues: RNA-binding protein 5-B (749 aa).

A disordered region spans residues 1–88 (MGSDKRVSRS…YHSDGDYMDH (88 aa)). Positions 102–182 (KTIMLRGLPI…KTIAMHYSNP (81 aa)) constitute an RRM 1 domain. The RanBP2-type zinc finger occupies 185 to 214 (KFEDWLCNKCGLYNFRRRLKCFRCGAAKAE). Positions 241–325 (SAIILRNIGP…KTIGVDFAKS (85 aa)) constitute an RRM 2 domain. Disordered stretches follow at residues 425–471 (QMYQ…SVPD), 520–558 (PAAD…AQQI), 570–595 (NKQK…ESAA), and 626–680 (TEEE…NSNI). A compositionally biased stretch (low complexity) spans 429 to 460 (QPGSPTQSGTSTAASTTPASTTSTEEATTPTA). 2 stretches are compositionally biased toward basic and acidic residues: residues 585-594 (SRDEERKESA) and 627-648 (EEEK…EKYG). One can recognise a G-patch domain in the interval 677 to 723 (NSNIGNKMLQAMGWKEGSGLGRKSQGITAPIQAQVRMRGAGLGAKGS).

The protein belongs to the RBM5/RBM10 family. In terms of assembly, component of the spliceosome A complex (also known as the prespliceosome). Appears to dissociate from the spliceosome upon formation of the spliceosome B complex (also known as the precatalytic spliceosome), in which the heterotrimeric U4/U6.U5 snRNPs are bound.

The protein resides in the nucleus. Component of the spliceosome A complex. Regulates alternative splicing of a number of mRNAs. May modulate splice site pairing after recruitment of the U1 and U2 snRNPs to the 5' and 3' splice sites of the intron. In Xenopus laevis (African clawed frog), this protein is RNA-binding protein 5-B (rbm5-b).